The sequence spans 247 residues: Isoprenyl transferase (247 aa).

Aspartate 18 is a catalytic residue. Aspartate 18 is a binding site for Mg(2+). Substrate contacts are provided by residues 19-22, tryptophan 23, arginine 31, histidine 35, and 63-65; these read GNGR and SSE. The active-site Proton acceptor is the asparagine 66. Residues tryptophan 67, arginine 69, arginine 186, and 192 to 194 contribute to the substrate site; that span reads RLS. Position 205 (glutamate 205) interacts with Mg(2+).

The protein belongs to the UPP synthase family. In terms of assembly, homodimer. Mg(2+) serves as cofactor.

Functionally, catalyzes the condensation of isopentenyl diphosphate (IPP) with allylic pyrophosphates generating different type of terpenoids. This is Isoprenyl transferase from Rhizobium meliloti (strain 1021) (Ensifer meliloti).